The following is a 347-amino-acid chain: Phosphate acyltransferase (347 aa).

Belongs to the PlsX family. In terms of assembly, homodimer. Probably interacts with PlsY.

It localises to the cytoplasm. It carries out the reaction a fatty acyl-[ACP] + phosphate = an acyl phosphate + holo-[ACP]. The protein operates within lipid metabolism; phospholipid metabolism. Catalyzes the reversible formation of acyl-phosphate (acyl-PO(4)) from acyl-[acyl-carrier-protein] (acyl-ACP). This enzyme utilizes acyl-ACP as fatty acyl donor, but not acyl-CoA. In Sinorhizobium fredii (strain NBRC 101917 / NGR234), this protein is Phosphate acyltransferase.